The following is a 265-amino-acid chain: Neutrophil elastase (265 aa).

Residues 1–26 (MALGRLSSRTLAAMLLALFLGGPALA) form the signal peptide. A Peptidase S1 domain is found at 29–247 (IVGGRPARPH…FADWINSIIR (219 aa)). Cys54 and Cys70 are oxidised to a cystine. Residues His69 and Asp116 each act as charge relay system in the active site. N-linked (GlcNAc...) asparagine glycans are attached at residues Asn123 and Asn172. Cystine bridges form between Cys150-Cys208, Cys180-Cys187, and Cys198-Cys223. Ser202 acts as the Charge relay system in catalysis.

It belongs to the peptidase S1 family. Elastase subfamily. As to quaternary structure, interacts with NOTCH2NL.

The enzyme catalyses Hydrolysis of proteins, including elastin. Preferential cleavage: Val-|-Xaa &gt; Ala-|-Xaa.. Serine protease that modifies the functions of natural killer cells, monocytes and granulocytes. Inhibits C5a-dependent neutrophil enzyme release and chemotaxis. Promotes blood coagulation. Through the activation of the platelet fibrinogen receptor integrin alpha-IIb/beta-3, potentiates platelet aggregation induced by a threshold concentration of cathepsin G (CTSG). Cleaves and thus inactivates tissue factor pathway inhibitor (TFPI). Capable of killing E.coli; probably digests outer membrane protein A (ompA) in E.coli. The sequence is that of Neutrophil elastase (Elane) from Mus musculus (Mouse).